Here is a 1457-residue protein sequence, read N- to C-terminus: Eye-specific diacylglycerol kinase (1457 aa).

3 disordered regions span residues 1 to 123 (MQQQ…SSEA), 136 to 177 (RSHS…PPCI), and 207 to 339 (YSNT…QPTT). Composition is skewed to low complexity over residues 22–62 (SATT…LRTT), 98–115 (SQRA…SSAS), and 141–154 (DSAT…DSGT). Residues 214–253 (ASEDEDEVEGHNAEEEEEGSAAIEDAEEETTEAATEEADE) show a composition bias toward acidic residues. The span at 254–266 (DPRTEVESEHDHD) shows a compositional bias: basic and acidic residues. Residues 294 to 303 (RLPRQMRRHT) are compositionally biased toward basic residues. Phorbol-ester/DAG-type zinc fingers lie at residues 591–641 (HYWK…TLAC) and 661–724 (HHWV…GEEC). Positions 758–799 (NNAASGSGGGGAGGGAGGGGGKSKKQTQRRQKGKEEKKEPRA) are disordered. A compositionally biased stretch (gly residues) spans 763-778 (GSGGGGAGGGAGGGGG). A compositionally biased stretch (basic residues) spans 779–789 (KSKKQTQRRQK). The 137-residue stretch at 808–944 (PEVIPVIVFI…MDRWRVKVTP (137 aa)) folds into the DAGKc domain. The disordered stretch occupies residues 1264–1302 (TPDQERSFAAFSQRQAQNERRQMDQAQGRGPGSTDEDLQ). ANK repeat units follow at residues 1320–1349 (QTSD…SLQS), 1353–1382 (NGQT…RRLI), 1389–1418 (LGQT…HLDT), and 1422–1451 (GGNT…TQPV).

It belongs to the eukaryotic diacylglycerol kinase family. Expressed specifically in adult eye.

It localises to the membrane. The catalysed reaction is a 1,2-diacyl-sn-glycerol + ATP = a 1,2-diacyl-sn-glycero-3-phosphate + ADP + H(+). Its function is as follows. Required for the maintenance of phospholipid turnover within the photoreceptor. This chain is Eye-specific diacylglycerol kinase (rdgA), found in Drosophila melanogaster (Fruit fly).